The primary structure comprises 636 residues: Biosynthetic arginine decarboxylase (636 aa).

K101 carries the post-translational modification N6-(pyridoxal phosphate)lysine. A substrate-binding site is contributed by 286-296 (FDVGGGLAVDY).

Belongs to the Orn/Lys/Arg decarboxylase class-II family. SpeA subfamily. The cofactor is Mg(2+). Pyridoxal 5'-phosphate serves as cofactor.

It catalyses the reaction L-arginine + H(+) = agmatine + CO2. It participates in amine and polyamine biosynthesis; agmatine biosynthesis; agmatine from L-arginine: step 1/1. Catalyzes the biosynthesis of agmatine from arginine. The chain is Biosynthetic arginine decarboxylase from Shewanella amazonensis (strain ATCC BAA-1098 / SB2B).